The primary structure comprises 349 residues: DNA replication and repair protein RecF (349 aa).

29 to 36 (GLNGVGKT) provides a ligand contact to ATP.

This sequence belongs to the RecF family.

Its subcellular location is the cytoplasm. In terms of biological role, the RecF protein is involved in DNA metabolism; it is required for DNA replication and normal SOS inducibility. RecF binds preferentially to single-stranded, linear DNA. It also seems to bind ATP. The chain is DNA replication and repair protein RecF from Acholeplasma laidlawii (strain PG-8A).